The following is an 825-amino-acid chain: MEGAGGENEKKKMSSERRKEKSRDAARSRRSKESEVFYELAHQLPLPHNVSSHLDKASVMRLTISYLRVRKLLDAGDLDIEDEMKAQMNCFYLKAPDGFVMVLTDDGDMIYISDNVNKYMGLTQFELTGHSVFDFTHPCDHEEMREMLTHRNGPVRKGKEQNTQRSFFLRMKCTLTSRGRTMNIKSATWKVLHCTGHIHVYDTSSNQPQCGYKKPPMTCLVLICEPIPHPSNIEIPLDSKTFLSRHSLDMKFSYCDERITELMGYEPEELLGRSIYEYYHALDSDHLTKTHHDMFTKGQVTTGQYRMLAKRGGYVWVETQATVIYNTKDSQPQCIVCVNYVVSGIIQHDLIFSLQQTESVLKPVESSDMKMTQLFTKVESEDTSCLFDKLKKEPDALTLLAPAAGDTIISLDFGSDDTETEDQQLEDVPLYNDVMFPSSNEKLNINLAMSPLPASETPKPLRSSADPALNQEVALKLESSPESLGLSFTMPQIQDQPASPSDGSTRQSSPEPNSPSEYCFDVDSDMVNVFKLELVEKLFAEDTEAKNPFSAQDTDLDLEMLAPYIPMDDDFQLRSFDQLSPLESNSPSPPSVSTVTGFQQTQLQKPTITVTAATATTATTTDESKAVTKDNIEDIKILIASPPSTQVPQEMTTAKASAYSGTHSRTASPDRAGKRVIEKTDKAHPRSLNLSVTLNQRNTVPEEELNPRTIALQNAQRKRKMEHDGSLFQAAGIGTLLQQPGDRAPTMSLSWKRVKGYISSEQDGMEQKTIFLIPSDLACRLLGQSMDESGLPQLTSYDCEVNAPIQGSRNLLQGEELLRALDQVN.

The tract at residues 1–30 is disordered; sequence MEGAGGENEKKKMSSERRKEKSRDAARSRR. The segment at 1–401 is interaction with TSGA10; it reads MEGAGGENEK…KEPDALTLLA (401 aa). Basic and acidic residues predominate over residues 7–30; that stretch reads ENEKKKMSSERRKEKSRDAARSRR. A bHLH domain is found at 17 to 70; sequence RRKEKSRDAARSRRSKESEVFYELAHQLPLPHNVSSHLDKASVMRLTISYLRVR. The segment at 21-30 is DNA-binding; that stretch reads KSRDAARSRR. Residues 85–158 enclose the PAS 1 domain; it reads KAQMNCFYLK…THRNGPVRKG (74 aa). Residues 170 to 191 form a required for heterodimer formation with ARNT region; the sequence is RMKCTLTSRGRTMNIKSATWKV. The PAS 2 domain occupies 228 to 298; the sequence is PHPSNIEIPL…KTHHDMFTKG (71 aa). S247 carries the post-translational modification Phosphoserine; by CK1. The PAC domain maps to 302–345; the sequence is TGQYRMLAKRGGYVWVETQATVIYNTKDSQPQCIVCVNYVVSGI. Positions 401 to 602 are ODD; that stretch reads APAAGDTIIS…STVTGFQQTQ (202 aa). 4-hydroxyproline is present on P402. The span at 492–516 shows a compositional bias: polar residues; that stretch reads QIQDQPASPSDGSTRQSSPEPNSPS. Positions 492 to 520 are disordered; that stretch reads QIQDQPASPSDGSTRQSSPEPNSPSEYCF. Residues 530-574 form an NTAD region; that stretch reads FKLELVEKLFAEDTEAKNPFSAQDTDLDLEMLAPYIPMDDDFQLR. Residue K531 is modified to N6-acetyllysine; alternate. A Glycyl lysine isopeptide (Lys-Gly) (interchain with G-Cter in ubiquitin); alternate cross-link involves residue K531. Glycyl lysine isopeptide (Lys-Gly) (interchain with G-Cter in ubiquitin) cross-links involve residues K537 and K546. Phosphoserine; by GSK3-beta is present on S550. Position 554 is a phosphothreonine; by GSK3-beta (T554). P563 bears the 4-hydroxyproline mark. S575 is modified (phosphoserine; by PLK3). The tract at residues 575 to 784 is ID; it reads SFDQLSPLES…SDLACRLLGQ (210 aa). Disordered stretches follow at residues 579–602 and 654–674; these read LSPL…QQTQ and AKAS…RAGK. Residue S588 is modified to Phosphoserine; by GSK3-beta. Residues 654 to 667 are compositionally biased toward polar residues; it reads AKASAYSGTHSRTA. The residue at position 657 (S657) is a Phosphoserine; by PLK3. Positions 717-721 match the Nuclear localization signal motif; it reads RKRKM. Residues 785–825 are CTAD; sequence SMDESGLPQLTSYDCEVNAPIQGSRNLLQGEELLRALDQVN. Residue C799 is modified to S-nitrosocysteine. N802 is modified ((3S)-3-hydroxyasparagine).

As to quaternary structure, interacts with the ARNT; forms a heterodimer that binds core DNA sequence 5'-TACGTG-3' within the hypoxia response element (HRE) of target gene promoters. Interacts with COPS5; the interaction increases the transcriptional activity of HIF1A through increased stability. Interacts with EP300 (via TAZ-type 1 domains); the interaction is stimulated in response to hypoxia and inhibited by CITED2. Interacts with CREBBP (via TAZ-type 1 domains). Interacts with NCOA1, NCOA2, APEX1 and HSP90. Interacts (hydroxylated within the ODD domain) with VHLL (via beta domain); the interaction, leads to polyubiquitination and subsequent HIF1A proteasomal degradation. During hypoxia, sumoylated HIF1A also binds VHL; the interaction promotes the ubiquitination of HIF1A. Interacts with SENP1; the interaction desumoylates HIF1A resulting in stabilization and activation of transcription. Interacts (via the ODD domain) with NAA10; the interaction appears not to acetylate HIF1A nor have any affect on protein stability, during hypoxia. Interacts with RWDD3; the interaction enhances HIF1A sumoylation. Interacts with TSGA10. Interacts with HIF3A. Interacts with RORA (via the DNA binding domain); the interaction enhances HIF1A transcription under hypoxia through increasing protein stability. Interaction with PSMA7 inhibits the transactivation activity of HIF1A under both normoxic and hypoxia-mimicking conditions. Interacts with USP20. Interacts with RACK1; promotes HIF1A ubiquitination and proteasome-mediated degradation. Interacts (via N-terminus) with USP19. Interacts with SIRT2. Interacts (deacetylated form) with EGLN1. Interacts with CBFA2T3. Interacts with HSP90AA1 and HSP90AB1. Interacts with DCUN1D1; this interaction increases the interaction between VHL and DCUN1D1. Interacts with HIF1AN. S-nitrosylation of Cys-799 may be responsible for increased recruitment of p300 coactivator necessary for transcriptional activity of HIF-1 complex. In terms of processing, acetylation of Lys-531 by ARD1 increases interaction with VHL and stimulates subsequent proteasomal degradation. Deacetylated by SIRT2 increases its interaction with and hydroxylation by EGLN1 thereby inactivating HIF1A activity by inducing its proteasomal degradation. Post-translationally, ubiquitinated; in normoxia, following hydroxylation and interaction with VHL. Lys-531 appears to be the principal site of ubiquitination. Clioquinol, the Cu/Zn-chelator, inhibits ubiquitination through preventing hydroxylation at Asn-802. Ubiquitinated by E3 ligase VHL. Deubiquitinated by UCHL1. Requires phosphorylation for DNA-binding. Phosphorylation at Ser-247 by CSNK1D/CK1 represses kinase activity and impairs ARNT binding. Phosphorylation by GSK3-beta and PLK3 promote degradation by the proteasome. In terms of processing, the iron and 2-oxoglutarate dependent 3-hydroxylation of asparagine is (S) stereospecific within HIF CTAD domains. Post-translationally, sumoylated; with SUMO1 under hypoxia. Sumoylation is enhanced through interaction with RWDD3. Both sumoylation and desumoylation seem to be involved in the regulation of its stability during hypoxia. Sumoylation can promote either its stabilization or its VHL-dependent degradation by promoting hydroxyproline-independent HIF1A-VHL complex binding, thus leading to HIF1A ubiquitination and proteasomal degradation. Desumoylation by SENP1 increases its stability amd transcriptional activity. There is a disaccord between various publications on the effect of sumoylation and desumoylation on its stability and transcriptional activity. In normoxia, is hydroxylated on Pro-402 and Pro-563 in the oxygen-dependent degradation domain (ODD) by EGLN1/PHD2 and EGLN2/PHD1. EGLN3/PHD3 has also been shown to hydroxylate Pro-563. The hydroxylated prolines promote interaction with VHL, initiating rapid ubiquitination and subsequent proteasomal degradation. Deubiquitinated by USP20. Under hypoxia, proline hydroxylation is impaired and ubiquitination is attenuated, resulting in stabilization. In normoxia, is hydroxylated on Asn-802 by HIF1AN, thus abrogating interaction with CREBBP and EP300 and preventing transcriptional activation. Repressed by iron ion, via Fe(2+) prolyl hydroxylase (PHD) enzymes-mediated hydroxylation and subsequent proteasomal degradation. Expressed in the kidney, higher expression is seen in the renal medulla than in the cortex. Expressed also in the perivenous zone of the liver.

The protein localises to the cytoplasm. The protein resides in the nucleus. It localises to the nucleus speckle. Induced by reactive oxygen species (ROS). Functionally, functions as a master transcriptional regulator of the adaptive response to hypoxia. Under hypoxic conditions, activates the transcription of over 40 genes, including erythropoietin, glucose transporters, glycolytic enzymes, vascular endothelial growth factor, HILPDA, and other genes whose protein products increase oxygen delivery or facilitate metabolic adaptation to hypoxia. Plays an essential role in embryonic vascularization, tumor angiogenesis and pathophysiology of ischemic disease. Heterodimerizes with ARNT; heterodimer binds to core DNA sequence 5'-TACGTG-3' within the hypoxia response element (HRE) of target gene promoters. Activation requires recruitment of transcriptional coactivators such as CREBBP and EP300. Activity is enhanced by interaction with NCOA1 and/or NCOA2. Interaction with redox regulatory protein APEX1 seems to activate CTAD and potentiates activation by NCOA1 and CREBBP. Involved in the axonal distribution and transport of mitochondria in neurons during hypoxia. In Rattus norvegicus (Rat), this protein is Hypoxia-inducible factor 1-alpha (Hif1a).